The primary structure comprises 143 residues: Transcriptional regulator MraZ (143 aa).

SpoVT-AbrB domains are found at residues 5–47 (EYSH…PMAV) and 76–119 (ALEA…SAEN).

Belongs to the MraZ family. As to quaternary structure, forms oligomers.

The protein localises to the cytoplasm. Its subcellular location is the nucleoid. The chain is Transcriptional regulator MraZ from Leuconostoc mesenteroides subsp. mesenteroides (strain ATCC 8293 / DSM 20343 / BCRC 11652 / CCM 1803 / JCM 6124 / NCDO 523 / NBRC 100496 / NCIMB 8023 / NCTC 12954 / NRRL B-1118 / 37Y).